The sequence spans 319 residues: Methionyl-tRNA formyltransferase (319 aa).

113-116 (SLLP) is a binding site for (6S)-5,6,7,8-tetrahydrofolate.

It belongs to the Fmt family.

The catalysed reaction is L-methionyl-tRNA(fMet) + (6R)-10-formyltetrahydrofolate = N-formyl-L-methionyl-tRNA(fMet) + (6S)-5,6,7,8-tetrahydrofolate + H(+). In terms of biological role, attaches a formyl group to the free amino group of methionyl-tRNA(fMet). The formyl group appears to play a dual role in the initiator identity of N-formylmethionyl-tRNA by promoting its recognition by IF2 and preventing the misappropriation of this tRNA by the elongation apparatus. This chain is Methionyl-tRNA formyltransferase, found in Pseudomonas fluorescens (strain Pf0-1).